The sequence spans 4684 residues: MVAGMLMPRDQLRAIYEVLFREGVMVAKKDRRPRSLHPHVPGVTNLQVMRAMASLRARGLVRETFAWCHFYWYLTNEGIAHLRQYLHLPPEIVPASLQRVRRPVAMVMPARRTPHVQAVQGPLGSPPKRGPLPTEEQRVYRRKELEEVSPETPVVPATTQRTLARPGPEPAPATDERDRVQKKTFTKWVNKHLIKAQRHISDLYEDLRDGHNLISLLEVLSGDSLPREKGRMRFHKLQNVQIALDYLRHRQVKLVNIRNDDIADGNPKLTLGLIWTIILHFQISDIQVSGQSEDMTAKEKLLLWSQRMVEGYQGLRCDNFTSSWRDGRLFNAIIHRHKPLLIDMNKVYRQTNLENLDQAFSVAERDLGVTRLLDPEDVDVPQPDEKSIITYVSSLYDAMPRVPDVQDGVRANELQLRWQEYRELVLLLLQWMRHHTAAFEERRFPSSFEEIEILWSQFLKFKEMELPAKEADKNRSKGIYQSLEGAVQAGQLKVPPGYHPLDVEKEWGKLHVAILEREKQLRSEFERLECLQRIVTKLQMEAGLCEEQLNQADALLQSDVRLLAAGKVPQRAGEVERDLDKADSMIRLLFNDVQTLKDGRHPQGEQMYRRVYRLHERLVAIRTEYNLRLKAGVAAPATQVAQVTLQSVQRRPELEDSTLRYLQDLLAWVEENQHRVDGAEWGVDLPSVEAQLGSHRGLHQSIEEFRAKIERARSDEGQLSPATRGAYRDCLGRLDLQYAKLLNSSKARLRSLESLHSFVAAATKELMWLNEKEEEEVGFDWSDRNTNMTAKKESYSALMRELELKEKKIKELQNAGDRLLREDHPARPTVESFQAALQTQWSWMLQLCCCIEAHLKENAAYFQFFSDVREAEGQLQKLQEALRRKYSCDRSATVTRLEDLLQDAQDEKEQLNEYKGHLSGLAKRAKAVVQLKPRHPAHPMRGRLPLLAVCDYKQVEVTVHKGDECQLVGPAQPSHWKVLSSSGSEAAVPSVCFLVPPPNQEAQEAVTRLEAQHQALVTLWHQLHVDMKSLLAWQSLRRDVQLIRSWSLATFRTLKPEEQRQALHSLELHYQAFLRDSQDAGGFGPEDRLMAEREYGSCSHHYQQLLQSLEQGAQEESRCQRCISELKDIRLQLEACETRTVHRLRLPLDKEPARECAQRIAEQQKAQAEVEGLGKGVARLSAEAEKVLALPEPSPAAPTLRSELELTLGKLEQVRSLSAIYLEKLKTISLVIRGTQGAEEVLRAHEEQLKEAQAVPATLPELEATKASLKKLRAQAEAQQPTFDALRDELRGAQEVGERLQQRHGERDVEVERWRERVAQLLERWQAVLAQTDVRQRELEQLGRQLRYYRESADPLGAWLQDARRRQEQIQAMPLADSQAVREQLRQEQALLEEIERHGEKVEECQRFAKQYINAIKDYELQLVTYKAQLEPVASPAKKPKVQSGSESVIQEYVDLRTHYSELTTLTSQYIKFISETLRRMEEEERLAEQQRAEERERLAEVEAALEKQRQLAEAHAQAKAQAEREAKELQQRMQEEVVRREEAAVDAQQQKRSIQEELQQLRQSSEAEIQAKARQAEAAERSRLRIEEEIRVVRLQLEATERQRGGAEGELQALRARAEEAEAQKRQAQEEAERLRRQVQDESQRKRQAEVELASRVKAEAEAAREKQRALQALEELRLQAEEAERRLRQAEVERARQVQVALETAQRSAEAELQSKRASFAEKTAQLERSLQEEHVAVAQLREEAERRAQQQAEAERAREEAERELERWQLKANEALRLRLQAEEVAQQKSLAQAEAEKQKEEAEREARRRGKAEEQAVRQRELAEQELEKQRQLAEGTAQQRLAAEQELIRLRAETEQGEQQRQLLEEELARLQREAAAATQKRQELEAELAKVRAEMEVLLASKARAEEESRSTSEKSKQRLEAEAGRFRELAEEAARLRALAEEAKRQRQLAEEDAARQRAEAERVLAEKLAAIGEATRLKTEAEIALKEKEAENERLRRLAEDEAFQRRRLEEQAAQHKADIEERLAQLRKASDSELERQKGLVEDTLRQRRQVEEEILALKASFEKAAAGKAELELELGRIRSNAEDTLRSKEQAELEAARQRQLAAEEERRRREAEERVQKSLAAEEEAARQRKAALEEVERLKAKVEEARRLRERAEQESARQLQLAQEAAQKRLQAEEKAHAFAVQQKEQELQQTLQQEQSVLDQLRGEAEAARRAAEEAEEARVQAEREAAQSRRQVEEAERLKQSAEEQAQARAQAQAAAEKLRKEAEQEAARRAQAEQAALRQKQAADAEMEKHKKFAEQTLRQKAQVEQELTTLRLQLEETDHQKNLLDEELQRLKAEATEAARQRSQVEEELFSVRVQMEELSKLKARIEAENRALILRDKDNTQRFLQEEAEKMKQVAEEAARLSVAAQEAARLRQLAEEDLAQQRALAEKMLKEKMQAVQEATRLKAEAELLQQQKELAQEQARRLQEDKEQMAQQLAEETQGFQRTLEAERQRQLEMSAEAERLKLRVAEMSRAQARAEEDAQRFRKQAEEIGEKLHRTELATQEKVTLVQTLEIQRQQSDHDAERLREAIAELEREKEKLQQEAKLLQLKSEEMQTVQQEQLLQETQALQQSFLSEKDSLLQRERFIEQEKAKLEQLFQDEVAKAQQLREEQQRQQQQMEQERQRLVASMEEARRRQHEAEEGVRRKQEELQQLEQQRRQQEELLAEENQRLREQLQLLEEQHRAALAHSEEVTASQVAATKTLPNGRDALDGPAAEAEPEHSFDGLRRKVSAQRLQEAGILSAEELQRLAQGHTTVDELARREDVRHYLQGRSSIAGLLLKATNEKLSVYAALQRQLLSPGTALILLEAQAASGFLLDPVRNRRLTVNEAVKEGVVGPELHHKLLSAERAVTGYKDPYTGQQISLFQAMQKGLIVREHGIRLLEAQIATGGVIDPVHSHRVPVDVAYRRGYFDEEMNRVLADPSDDTKGFFDPNTHENLTYLQLLERCVEDPETGLCLLPLTDKAAKGGELVYTDSEARDVFEKATVSAPFGKFQGKTVTIWEIINSEYFTAEQRRDLLRQFRTGRITVEKIIKIIITVVEEQEQKGRLCFEGLRSLVPAAELLESRVIDRELYQQLQRGERSVRDVAEVDTVRRALRGANVIAGVWLEEAGQKLSIYNALKKDLLPSDMAVALLEAQAGTGHIIDPATSARLTVDEAVRAGLVGPEFHEKLLSAEKAVTGYRDPYTGQSVSLFQALKKGLIPREQGLRLLDAQLSTGGIVDPSKSHRVPLDVACARGCLDEETSRALSAPRADAKAYSDPSTGEPATYGELQQRCRPDQLTGLSLLPLSEKAARARQEELYSELQARETFEKTPVEVPVGGFKGRTVTVWELISSEYFTAEQRQELLRQFRTGKVTVEKVIKILITIVEEVETLRQERLSFSGLRAPVPASELLASGVLSRAQFEQLKDGKTTVKDLSELGSVRTLLQGSGCLAGIYLEDTKEKVSIYEAMRRGLLRATTAALLLEAQAATGFLVDPVRNQRLYVHEAVKAGVVGPELHEQLLSAEKAVTGYRDPYSGSTISLFQAMQKGLVLRQHGIRLLEAQIATGGIIDPVHSHRVPVDVAYQRGYFSEEMNRVLADPSDDTKGFFDPNTHENLTYRQLLERCVEDPETGLRLLPLKGAEKAEVVETTQVYTEEETRRAFEETQIDIPGGGSHGGSTMSLWEVMQSDLIPEEQRAQLMADFQAGRVTKERMIIIIIEIIEKTEIIRQQGLASYDYVRRRLTAEDLFEARIISLETYNLLREGTRSLREALEAESAWCYLYGTGSVAGVYLPGSRQTLSIYQALKKGLLSAEVARLLLEAQAATGFLLDPVKGERLTVDEAVRKGLVGPELHDRLLSAERAVTGYRDPYTEQTISLFQAMKKELIPTEEALRLLDAQLATGGIVDPRLGFHLPLEVAYQRGYLNKDTHDQLSEPSEVRSYVDPSTDERLSYTQLLRRCRRDDGTGQLLLPLSDARKLTFRGLRKQITMEELVRSQVMDEATALQLREGLTSIEEVTKNLQKFLEGTSCIAGVFVDATKERLSVYQAMKKGIIRPGTAFELLEAQAATGYVIDPIKGLKLTVEEAVRMGIVGPEFKDKLLSAERAVTGYKDPYSGKLISLFQAMKKGLILKDHGIRLLEAQIATGGIIDPEESHRLPVEVAYKRGLFDEEMNEILTDPSDDTKGFFDPNTEENLTYLQLMERCITDPQTGLCLLPLKEKKRERKTSSKSSVRKRRVVIVDPETGKEMSVYEAYRKGLIDHQTYLELSEQECEWEEITISSSDGVVKSMIIDRRSGRQYDIDDAIAKNLIDRSALDQYRAGTLSITEFADMLSGNAGGFRSRSSSVGSSSSYPISPAVSRTQLASWSDPTEETGPVAGILDTETLEKVSITEAMHRNLVDNITGQRLLEAQACTGGIIDPSTGERFPVTDAVNKGLVDKIMVDRINLAQKAFCGFEDPRTKTKMSAAQALKKGWLYYEAGQRFLEVQYLTGGLIEPDTPGRVPLDEALQRGTVDARTAQKLRDVGAYSKYLTCPKTKLKISYKDALDRSMVEEGTGLRLLEAAAQSTKGYYSPYSVSGSGSTAGSRTGSRTGSRAGSRRGSFDATGSGFSMTFSSSSYSSSGYGRRYASGSSASLGGPESAVA.

The segment at 1-1470 (MVAGMLMPRD…SELTTLTSQY (1470 aa)) is globular 1. Phe20 and Arg21 each carry phosphoserine. Residue Val26 is modified to Phosphotyrosine. Phosphoserine is present on Gly42. Position 113 is a phosphothreonine (Thr113). A phosphoserine mark is found at Ser125 and Ser149. The interval 144-179 (ELEEVSPETPVVPATTQRTLARPGPEPAPATDERDR) is disordered. The segment at 175-400 (DERDRVQKKT…YVSSLYDAMP (226 aa)) is actin-binding. 2 Calponin-homology (CH) domains span residues 179 to 282 (RVQK…LHFQ) and 295 to 400 (MTAK…DAMP). The stretch at 645–710 (LQSVQRRPEL…SIEEFRAKIE (66 aa)) is one Spectrin 1 repeat. Ser720 carries the post-translational modification Phosphoserine. Spectrin repeat units follow at residues 740 to 824 (KLLN…REDH) and 837 to 930 (LQTQ…AVVQ). One can recognise an SH3 domain in the interval 941–998 (RGRLPLLAVCDYKQVEVTVHKGDECQLVGPAQPSHWKVLSSSGSEAAVPSVCFLVPPP). The interval 964-4574 (ECQLVGPAQP…VGAYSKYLTC (3611 aa)) is required for interaction with intermediate filament proteins. At Ser1047 the chain carries Phosphoserine. The stretch at 1315–1415 (RERVAQLLER…QRFAKQYINA (101 aa)) is one Spectrin 4 repeat. Ser1435 carries the post-translational modification Phosphoserine. Residues 1469 to 2756 (QYIKFISETL…AHSEEVTASQ (1288 aa)) adopt a coiled-coil conformation. The segment at 1471–2755 (IKFISETLRR…LAHSEEVTAS (1285 aa)) is central fibrous rod domain. Positions 1618–1650 (RAEEAEAQKRQAQEEAERLRRQVQDESQRKRQA) are disordered. Phosphoserine is present on Ser1721. Lys1725 is subject to N6-acetyllysine. Ser1732 carries the phosphoserine modification. Disordered regions lie at residues 1794–1836 (LAQA…KQRQ), 2105–2139 (EAARQRQLAAEEERRRREAEERVQKSLAAEEEAAR), and 2217–2307 (RGEA…MEKH). Composition is skewed to basic and acidic residues over residues 1798–1836 (EAEKQKEEAEREARRRGKAEEQAVRQRELAEQELEKQRQ), 2105–2128 (EAARQRQLAAEEERRRREAEERVQ), and 2217–2258 (RGEA…KQSA). Over residues 2259 to 2272 (EEQAQARAQAQAAA) the composition is skewed to low complexity. Residues 2273–2288 (EKLRKEAEQEAARRAQ) show a composition bias toward basic and acidic residues. Ser2631 is modified (phosphoserine). The residue at position 2636 (Lys2636) is an N6-acetyllysine. Disordered stretches follow at residues 2668-2707 (REEQQRQQQQMEQERQRLVASMEEARRRQHEAEEGVRRKQ) and 2763-2784 (LPNGRDALDGPAAEAEPEHSFD). Residues 2679–2707 (EQERQRLVASMEEARRRQHEAEEGVRRKQ) are compositionally biased toward basic and acidic residues. A globular 2 region spans residues 2756–4684 (QVAATKTLPN…SLGGPESAVA (1929 aa)). Ser2782 and Ser2802 each carry phosphoserine. Plectin repeat units lie at residues 2826–2863 (RHYLQGRSSIAGLLLKATNEKLSVYAALQRQLLSPGTA), 2864–2901 (LILLEAQAASGFLLDPVRNRRLTVNEAVKEGVVGPELH), 2902–2939 (HKLLSAERAVTGYKDPYTGQQISLFQAMQKGLIVREHG), 2940–2977 (IRLLEAQIATGGVIDPVHSHRVPVDVAYRRGYFDEEMN), and 2981–3015 (ADPSDDTKGFFDPNTHENLTYLQLLERCVEDPETG). Thr2886 carries the phosphothreonine modification. Phosphotyrosine is present on Tyr3033. A Phosphoserine modification is found at Ser3036. Residues Lys3053 and Lys3091 each carry the N6-acetyllysine modification. Plectin repeat units follow at residues 3116–3153 (SLVPAAELLESRVIDRELYQQLQRGERSVRDVAEVDTV), 3154–3191 (RRALRGANVIAGVWLEEAGQKLSIYNALKKDLLPSDMA), 3192–3229 (VALLEAQAGTGHIIDPATSARLTVDEAVRAGLVGPEFH), 3230–3267 (EKLLSAEKAVTGYRDPYTGQSVSLFQALKKGLIPREQG), 3268–3305 (LRLLDAQLSTGGIVDPSKSHRVPLDVACARGCLDEETS), and 3306–3343 (RALSAPRADAKAYSDPSTGEPATYGELQQRCRPDQLTG). The interval 3310-3331 (APRADAKAYSDPSTGEPATYGE) is disordered. A Phosphotyrosine modification is found at Tyr3362. Lys3420 is modified (N6-acetyllysine). Plectin repeat units follow at residues 3485–3522 (RTLLQGSGCLAGIYLEDTKEKVSIYEAMRRGLLRATTA), 3523–3560 (ALLLEAQAATGFLVDPVRNQRLYVHEAVKAGVVGPELH), 3561–3598 (EQLLSAEKAVTGYRDPYSGSTISLFQAMQKGLVLRQHG), 3599–3636 (IRLLEAQIATGGIIDPVHSHRVPVDVAYQRGYFSEEMN), and 3640–3674 (ADPSDDTKGFFDPNTHENLTYRQLLERCVEDPETG). At Ser3580 the chain carries Phosphoserine. Residue Thr3785 is modified to Phosphothreonine. Plectin repeat units lie at residues 3820–3857 (WCYLYGTGSVAGVYLPGSRQTLSIYQALKKGLLSAEVA), 3858–3895 (RLLLEAQAATGFLLDPVKGERLTVDEAVRKGLVGPELH), 3896–3933 (DRLLSAERAVTGYRDPYTEQTISLFQAMKKELIPTEEA), 3934–3971 (LRLLDAQLATGGIVDPRLGFHLPLEVAYQRGYLNKDTH), and 3975–4008 (SEPSEVRSYVDPSTDERLSYTQLLRRCRRDDGTG). A required for interaction with type2 keratins, DES and VIM region spans residues 3956 to 4293 (PLEVAYQRGY…ETGKEMSVYE (338 aa)). Thr4030 carries the post-translational modification Phosphothreonine. A Phosphoserine modification is found at Ser4054. Plectin repeat units follow at residues 4063-4100 (QKFLEGTSCIAGVFVDATKERLSVYQAMKKGIIRPGTA), 4101-4138 (FELLEAQAATGYVIDPIKGLKLTVEEAVRMGIVGPEFK), 4139-4176 (DKLLSAERAVTGYKDPYSGKLISLFQAMKKGLILKDHG), 4177-4214 (IRLLEAQIATGGIIDPEESHRLPVEVAYKRGLFDEEMN), 4218-4252 (TDPSDDTKGFFDPNTEENLTYLQLMERCITDPQTG), 4265-4305 (RKTS…HQTY), and 4319-4356 (TISSSDGVVKSMIIDRRSGRQYDIDDAIAKNLIDRSAL). The interval 4250–4300 (QTGLCLLPLKEKKRERKTSSKSSVRKRRVVIVDPETGKEMSVYEAYRKGLI) is binding to intermediate filaments. Residues Ser4382, Ser4384, Ser4385, Ser4386, Ser4389, Ser4390, Ser4391, and Ser4392 each carry the phosphoserine modification. Tyr4393 is subject to Phosphotyrosine. 3 positions are modified to phosphoserine: Ser4396, Ser4400, and Ser4406. Plectin repeat units lie at residues 4408-4445 (SDPTEETGPVAGILDTETLEKVSITEAMHRNLVDNITG), 4446-4483 (QRLLEAQACTGGIIDPSTGERFPVTDAVNKGLVDKIMV), 4484-4521 (DRINLAQKAFCGFEDPRTKTKMSAAQALKKGWLYYEAG), 4522-4559 (QRFLEVQYLTGGLIEPDTPGRVPLDEALQRGTVDARTA), and 4560-4597 (QKLRDVGAYSKYLTCPKTKLKISYKDALDRSMVEEGTG). Thr4411 bears the Phosphothreonine mark. The tract at residues 4505-4574 (MSAAQALKKG…VGAYSKYLTC (70 aa)) is required for efficient interaction with KRT5 and KRT14 heterodimers. Thr4539 is modified (phosphothreonine; by CDK1). Phosphoserine is present on residues Ser4607 and Ser4613. Residues 4611–4678 (YYSPYSVSGS…ASGSSASLGG (68 aa)) are compositionally biased toward low complexity. The tract at residues 4611 to 4684 (YYSPYSVSGS…SLGGPESAVA (74 aa)) is disordered. Tyr4615 is subject to Phosphotyrosine. Ser4616, Ser4618, and Ser4622 each carry phosphoserine. A Phosphothreonine modification is found at Thr4623. Positions 4625–4640 (GSRTGSRTGSRAGSRR) are 4 X 4 AA tandem repeats of G-S-R-X. Phosphoserine is present on Ser4626. 2 positions are modified to omega-N-methylarginine: Arg4627 and Arg4640. Phosphoserine occurs at positions 4642, 4672, and 4675.

The protein belongs to the plakin or cytolinker family. In terms of assembly, homodimer or homotetramer. Interacts (via actin-binding domain) with SYNE3. Interacts (via calponin-homology (CH) 1 domain) with VIM (via rod region). Interacts (via N-terminus) with DST isoform 2 (via N-terminus). Interacts with FER. Interacts with TOR1A. Interacts with ANK3. Identified in complexes that contain VIM, EZR, AHNAK, BFSP1, BFSP2, ANK2, PLEC, PRX and spectrin. Interacts with COL17A1. Interacts with KRT14, heterodimers consisting of KRT8 and KRT18, heterodimers consisting of KRT5 and KRT14, heterodimers consisting of KRT14 and KRT15, and heterodimers consisting of KRT1 and KRT10. Interacts with DES and VIM. Post-translationally, phosphorylated by CDK1; regulates dissociation from intermediate filaments during mitosis. In terms of tissue distribution, widely expressed with highest levels in muscle, heart, placenta and spinal cord.

Its subcellular location is the cytoplasm. It is found in the cytoskeleton. It localises to the cell junction. The protein localises to the hemidesmosome. The protein resides in the cell projection. Its subcellular location is the podosome. In terms of biological role, interlinks intermediate filaments with microtubules and microfilaments and anchors intermediate filaments to desmosomes or hemidesmosomes. Could also bind muscle proteins such as actin to membrane complexes in muscle. May be involved not only in the filaments network, but also in the regulation of their dynamics. Structural component of muscle. Isoform 9 plays a major role in the maintenance of myofiber integrity. The protein is Plectin (PLEC) of Homo sapiens (Human).